Here is a 209-residue protein sequence, read N- to C-terminus: Orotate phosphoribosyltransferase (209 aa).

Residues Arg96, Lys100, His102, and 122–130 (EDLISTGKS) contribute to the 5-phospho-alpha-D-ribose 1-diphosphate site. An orotate-binding site is contributed by Ser126.

This sequence belongs to the purine/pyrimidine phosphoribosyltransferase family. PyrE subfamily. In terms of assembly, homodimer. Requires Mg(2+) as cofactor.

It catalyses the reaction orotidine 5'-phosphate + diphosphate = orotate + 5-phospho-alpha-D-ribose 1-diphosphate. It functions in the pathway pyrimidine metabolism; UMP biosynthesis via de novo pathway; UMP from orotate: step 1/2. Catalyzes the transfer of a ribosyl phosphate group from 5-phosphoribose 1-diphosphate to orotate, leading to the formation of orotidine monophosphate (OMP). The polypeptide is Orotate phosphoribosyltransferase (Coxiella burnetii (strain RSA 493 / Nine Mile phase I)).